The sequence spans 471 residues: UDP-glycosyltransferase 1 (471 aa).

His-15 acts as the Proton acceptor in catalysis. An anthocyanidin is bound at residue His-15. Catalysis depends on Asp-124, which acts as the Charge relay. UDP-alpha-D-glucose-binding residues include Thr-146, Ala-348, Gln-350, His-365, Trp-368, Asn-369, Ser-370, and Glu-373. Residue Ala-388 coordinates an anthocyanidin. The UDP-alpha-D-glucose site is built by Glu-389 and Gln-390.

It belongs to the UDP-glycosyltransferase family. In terms of tissue distribution, expressed in roots. Detected in stems and leaves.

The enzyme catalyses a 7-hydroxyisoflavone + UDP-alpha-D-glucose = a 7-hydroxyisoflavone 7-O-beta-D-glucoside + UDP + H(+). In terms of biological role, isoflavone 7-O-glucosyltransferase converting daidzein to daidzin, genistein to genistin and formononetin to ononin. Shows some activity toward the chalcone isoliquiritigenin, the flavanones liquiritigenin and naringenin, and the flavone apigenin, but not toward cyanidin, luteolin, kaempferol, quercetin, daidzin and puerarin. This chain is UDP-glycosyltransferase 1, found in Pueraria montana var. lobata (Kudzu vine).